A 497-amino-acid chain; its full sequence is Long chain base biosynthesis protein 2c (497 aa).

The helical transmembrane segment at Val4–His24 threads the bilayer. Position 319 is an N6-(pyridoxal phosphate)lysine (Lys319).

It belongs to the class-II pyridoxal-phosphate-dependent aminotransferase family. In terms of assembly, heterodimer with LCB1. Component of the serine palmitoyltransferase (SPT) complex, composed of LCB1 and LCB2. Pyridoxal 5'-phosphate serves as cofactor.

The protein localises to the endoplasmic reticulum membrane. The enzyme catalyses L-serine + hexadecanoyl-CoA + H(+) = 3-oxosphinganine + CO2 + CoA. The protein operates within lipid metabolism; sphingolipid metabolism. In terms of biological role, serine palmitoyltransferase (SPT). The heterodimer formed with LCB1 constitutes the catalytic core. This is Long chain base biosynthesis protein 2c from Oryza sativa subsp. japonica (Rice).